The following is a 256-amino-acid chain: 1-(5-phosphoribosyl)-5-[(5-phosphoribosylamino)methylideneamino] imidazole-4-carboxamide isomerase (256 aa).

Asp-8 (proton acceptor) is an active-site residue. The Proton donor role is filled by Asp-130.

The protein belongs to the HisA/HisF family.

The protein resides in the cytoplasm. The catalysed reaction is 1-(5-phospho-beta-D-ribosyl)-5-[(5-phospho-beta-D-ribosylamino)methylideneamino]imidazole-4-carboxamide = 5-[(5-phospho-1-deoxy-D-ribulos-1-ylimino)methylamino]-1-(5-phospho-beta-D-ribosyl)imidazole-4-carboxamide. It participates in amino-acid biosynthesis; L-histidine biosynthesis; L-histidine from 5-phospho-alpha-D-ribose 1-diphosphate: step 4/9. This is 1-(5-phosphoribosyl)-5-[(5-phosphoribosylamino)methylideneamino] imidazole-4-carboxamide isomerase from Chlorobium luteolum (strain DSM 273 / BCRC 81028 / 2530) (Pelodictyon luteolum).